The sequence spans 67 residues: DNA-directed RNA polymerase subunit omega (67 aa).

This sequence belongs to the RNA polymerase subunit omega family. The RNAP catalytic core consists of 2 alpha, 1 beta, 1 beta' and 1 omega subunit. When a sigma factor is associated with the core the holoenzyme is formed, which can initiate transcription.

It catalyses the reaction RNA(n) + a ribonucleoside 5'-triphosphate = RNA(n+1) + diphosphate. Functionally, promotes RNA polymerase assembly. Latches the N- and C-terminal regions of the beta' subunit thereby facilitating its interaction with the beta and alpha subunits. In Bordetella avium (strain 197N), this protein is DNA-directed RNA polymerase subunit omega.